The sequence spans 157 residues: Protein NrdI (157 aa).

It belongs to the NrdI family.

Probably involved in ribonucleotide reductase function. The sequence is that of Protein NrdI from Mycoplasma mycoides subsp. mycoides SC (strain CCUG 32753 / NCTC 10114 / PG1).